The primary structure comprises 130 residues: L-ectoine synthase (130 aa).

Belongs to the ectoine synthase family.

The enzyme catalyses (2S)-4-acetamido-2-aminobutanoate = L-ectoine + H2O. Its pathway is amine and polyamine biosynthesis; ectoine biosynthesis; L-ectoine from L-aspartate 4-semialdehyde: step 3/3. Its function is as follows. Catalyzes the circularization of gamma-N-acetyl-alpha,gamma-diaminobutyric acid (ADABA) to ectoine (1,4,5,6-tetrahydro-2-methyl-4-pyrimidine carboxylic acid), which is an excellent osmoprotectant. The sequence is that of L-ectoine synthase from Mycolicibacterium vanbaalenii (strain DSM 7251 / JCM 13017 / BCRC 16820 / KCTC 9966 / NRRL B-24157 / PYR-1) (Mycobacterium vanbaalenii).